The following is a 147-amino-acid chain: D-aminoacyl-tRNA deacylase (147 aa).

Residues 137–138 (GP) carry the Gly-cisPro motif, important for rejection of L-amino acids motif.

It belongs to the DTD family. In terms of assembly, homodimer.

Its subcellular location is the cytoplasm. The catalysed reaction is glycyl-tRNA(Ala) + H2O = tRNA(Ala) + glycine + H(+). It carries out the reaction a D-aminoacyl-tRNA + H2O = a tRNA + a D-alpha-amino acid + H(+). In terms of biological role, an aminoacyl-tRNA editing enzyme that deacylates mischarged D-aminoacyl-tRNAs. Also deacylates mischarged glycyl-tRNA(Ala), protecting cells against glycine mischarging by AlaRS. Acts via tRNA-based rather than protein-based catalysis; rejects L-amino acids rather than detecting D-amino acids in the active site. By recycling D-aminoacyl-tRNA to D-amino acids and free tRNA molecules, this enzyme counteracts the toxicity associated with the formation of D-aminoacyl-tRNA entities in vivo and helps enforce protein L-homochirality. The protein is D-aminoacyl-tRNA deacylase of Acinetobacter baumannii (strain ATCC 17978 / DSM 105126 / CIP 53.77 / LMG 1025 / NCDC KC755 / 5377).